Reading from the N-terminus, the 125-residue chain is 13 kDa ribonucleoprotein-associated protein (125 aa).

This sequence belongs to the eukaryotic ribosomal protein eL8 family. In terms of assembly, component of the U3 snoRNP particle. Binds to the C'/D and B/C motifs in U3 snoRNA. Component of the 25S U4/U6.U5 tri-snRNP particle, a subcomplex of the spliceosome. Binds to the 5' stem-loop of U4 snRNA.

It is found in the nucleus. It localises to the nucleolus. Functionally, common component of the spliceosome and rRNA processing machinery. In association with the spliceosomal U4/U6.U5 tri-snRNP particle, required for splicing of pre-mRNA. In association with box C/D snoRNPs, required for processing of pre-ribosomal RNA (rRNA) and site-specific 2'-O-methylation of substrate RNAs. Essential for the accumulation and stability of U4 snRNA, U6 snRNA, and box C/D snoRNAs. The polypeptide is 13 kDa ribonucleoprotein-associated protein (snu13) (Schizosaccharomyces pombe (strain 972 / ATCC 24843) (Fission yeast)).